Consider the following 354-residue polypeptide: MTELKNDRYLRALLRQPVDVTPVWMMRQAGRYLPEYKATRAQAGDFMSLCKNAELACEVTLQPLRRYPLDAAILFSDILTVPDAMGLGLYFEAGEGPRFTSPVTCKADVDKLPIPDPEDELGYVMNAVRTIRRELKGEVPLIGFSGSPWTLATYMVEGGSSKAFTVIKKMMYADPQALHALLDKLAKSVTLYLNAQIKAGAQAVMIFDTWGGVLTGRDYQQFSLYYMHKIVDGLLRENDGRRVPVTLFTKGGGQWLEAMAETGCDALGLDWTTDIADARRRVGNKVALQGNMDPSMLYAPPARIEEEVASILAGFGHGEGHVFNLGHGIHQDVPPEHAGVFVEAVHRLSEQYHR.

Residues 27–31, aspartate 77, tyrosine 154, threonine 209, and histidine 327 each bind substrate; that span reads RQAGR.

It belongs to the uroporphyrinogen decarboxylase family. Homodimer.

The protein localises to the cytoplasm. It catalyses the reaction uroporphyrinogen III + 4 H(+) = coproporphyrinogen III + 4 CO2. It participates in porphyrin-containing compound metabolism; protoporphyrin-IX biosynthesis; coproporphyrinogen-III from 5-aminolevulinate: step 4/4. Catalyzes the decarboxylation of four acetate groups of uroporphyrinogen-III to yield coproporphyrinogen-III. This chain is Uroporphyrinogen decarboxylase, found in Escherichia coli (strain UTI89 / UPEC).